The primary structure comprises 447 residues: UPF0210 protein LSL_0162 (447 aa).

Belongs to the UPF0210 family. As to quaternary structure, homodimer.

The sequence is that of UPF0210 protein LSL_0162 from Ligilactobacillus salivarius (strain UCC118) (Lactobacillus salivarius).